The primary structure comprises 511 residues: Piperic acid synthase CYP719A37 (511 aa).

The helical transmembrane segment at 7-27 (VDPALFSAFVSIIFFFLGMFL) threads the bilayer. C455 serves as a coordination point for heme.

It belongs to the cytochrome P450 family. It depends on heme as a cofactor. Specifically expressed in immature fruits and roots. Barely detectable in young leaves and flowering spadices.

The protein resides in the membrane. Its subcellular location is the endoplasmic reticulum membrane. The enzyme catalyses (E,E)-feruperate + reduced [NADPH--hemoprotein reductase] + O2 = (E,E)-piperate + oxidized [NADPH--hemoprotein reductase] + 2 H2O + H(+). Its pathway is aromatic compound metabolism. Cytochrome P450 monooxygenase involved in the biosynthesis of aromatic piperamides natural products such as piperine (1-piperoyl-piperidine), the pungent principle contributing, together with several terpenoids, to the aromatic properties of black pepper fruits, and displaying numerous pharmacological activities such as antiproliferative, antitumor, antiangiogenesis, antioxidant, antidiabetic, antiobesity, cardioprotective, antimicrobial, antiaging, and immunomodulatory effects. Catalyzes the conversion of feruperic acid (5-(4-hydroxy-3-methoxyphenyl)-2,4-pentadienoic acid) to piperic acid. Inactive toward ferulic acid and feruperine. The protein is Piperic acid synthase CYP719A37 of Piper nigrum (Black pepper).